The chain runs to 358 residues: Peptide chain release factor 1 (358 aa).

N5-methylglutamine is present on glutamine 233.

Belongs to the prokaryotic/mitochondrial release factor family. Post-translationally, methylated by PrmC. Methylation increases the termination efficiency of RF1.

The protein localises to the cytoplasm. Peptide chain release factor 1 directs the termination of translation in response to the peptide chain termination codons UAG and UAA. This chain is Peptide chain release factor 1, found in Lysinibacillus sphaericus (strain C3-41).